We begin with the raw amino-acid sequence, 179 residues long: PP2C-like domain-containing protein R307 (179 aa).

The PPM-type phosphatase domain occupies 1-176 (MNESKRENIQ…DNVSVIIIFF (176 aa)).

The protein resides in the virion. The chain is PP2C-like domain-containing protein R307 from Acanthamoeba polyphaga mimivirus (APMV).